A 73-amino-acid polypeptide reads, in one-letter code: MKIISKRRAMTIYRQHPESRIFRYCTGKYQWHGSVCHYTGRDVPDIAGVLAVYAERRQDRNGPYTCLMSITLN.

Belongs to the YeeT/YkfH/YpjJ family.

This is an uncharacterized protein from Escherichia coli (strain K12).